The primary structure comprises 332 residues: 2,7-dihydroxy-5-methyl-1-naphthoate 7-O-methyltransferase (332 aa).

Arg-11 serves as a coordination point for substrate. S-adenosyl-L-methionine is bound by residues Trp-133, His-153, 175–179 (DVGGG), Gly-177, Asp-200, 227–228 (SF), and 242–243 (SA). His-246 acts as the Proton acceptor in catalysis. Asp-247 is a binding site for substrate.

It belongs to the class I-like SAM-binding methyltransferase superfamily. Cation-independent O-methyltransferase family.

The catalysed reaction is 2,7-dihydroxy-5-methyl-1-naphthoate + S-adenosyl-L-methionine = 2-hydroxy-7-methoxy-5-methyl-1-naphthoate + S-adenosyl-L-homocysteine + H(+). It functions in the pathway antibiotic biosynthesis. In terms of biological role, S-adenosyl-L-methionine-dependent O-methyltransferase that catalyzes regiospecific methylation at the 7-hydroxy group of 2,7-dihydroxy-5-methyl-1-naphthoate in the biosynthesis of the naphthoate moiety of the neocarzinostatin chromophore. Also recognizes other dihydroxynaphthoate as substrates and catalyzes their regiospecific O-methylation. The carboxylate and its ortho-hydroxy groups of the substrate appear to be crucial for NcsB1 substrate recognition and binding, and O-methylation takes place only at the free hydroxy group of these dihydroxynaphthoic acids. This Streptomyces carzinostaticus protein is 2,7-dihydroxy-5-methyl-1-naphthoate 7-O-methyltransferase.